A 269-amino-acid polypeptide reads, in one-letter code: Subtilisin Savinase (269 aa).

Gln2 is a binding site for Ca(2+). One can recognise a Peptidase S8 domain in the interval 5-268; sequence PWGISRVQAP…SGLVNAEAAT (264 aa). Asp32 acts as the Charge relay system in catalysis. Asp40 contacts Ca(2+). The active-site Charge relay system is the His62. Ca(2+) is bound by residues Leu73, Asn75, Ile77, Val79, Ala163, Tyr165, and Ala168. Ser215 functions as the Charge relay system in the catalytic mechanism.

This sequence belongs to the peptidase S8 family. Ca(2+) serves as cofactor.

It is found in the secreted. The enzyme catalyses Hydrolysis of proteins with broad specificity for peptide bonds, and a preference for a large uncharged residue in P1. Hydrolyzes peptide amides.. Subtilisin is an extracellular alkaline serine protease, it catalyzes the hydrolysis of proteins and peptide amides. In Lederbergia lenta (Bacillus lentus), this protein is Subtilisin Savinase.